A 478-amino-acid chain; its full sequence is tRNA(Ile)-lysidine synthase (478 aa).

Ser-27–Ser-32 is a binding site for ATP.

Belongs to the tRNA(Ile)-lysidine synthase family.

Its subcellular location is the cytoplasm. It carries out the reaction cytidine(34) in tRNA(Ile2) + L-lysine + ATP = lysidine(34) in tRNA(Ile2) + AMP + diphosphate + H(+). Its function is as follows. Ligates lysine onto the cytidine present at position 34 of the AUA codon-specific tRNA(Ile) that contains the anticodon CAU, in an ATP-dependent manner. Cytidine is converted to lysidine, thus changing the amino acid specificity of the tRNA from methionine to isoleucine. The sequence is that of tRNA(Ile)-lysidine synthase from Rickettsia africae (strain ESF-5).